Consider the following 129-residue polypeptide: Large ribosomal subunit protein bL19 (129 aa).

The protein belongs to the bacterial ribosomal protein bL19 family.

This protein is located at the 30S-50S ribosomal subunit interface and may play a role in the structure and function of the aminoacyl-tRNA binding site. The sequence is that of Large ribosomal subunit protein bL19 from Paraburkholderia phytofirmans (strain DSM 17436 / LMG 22146 / PsJN) (Burkholderia phytofirmans).